Here is a 93-residue protein sequence, read N- to C-terminus: UPF0298 protein LMHCC_0506 (93 aa).

Belongs to the UPF0298 family.

It is found in the cytoplasm. The protein is UPF0298 protein LMHCC_0506 of Listeria monocytogenes serotype 4a (strain HCC23).